The following is a 391-amino-acid chain: DNA-directed RNA polymerase subunit Rpo1C (391 aa).

It belongs to the RNA polymerase beta' chain family. In terms of assembly, part of the RNA polymerase complex.

The protein localises to the cytoplasm. It localises to the chromosome. It carries out the reaction RNA(n) + a ribonucleoside 5'-triphosphate = RNA(n+1) + diphosphate. Functionally, DNA-dependent RNA polymerase (RNAP) catalyzes the transcription of DNA into RNA using the four ribonucleoside triphosphates as substrates. Forms part of the jaw domain. This Thermococcus kodakarensis (strain ATCC BAA-918 / JCM 12380 / KOD1) (Pyrococcus kodakaraensis (strain KOD1)) protein is DNA-directed RNA polymerase subunit Rpo1C.